The primary structure comprises 324 residues: Putative S-adenosyl-L-methionine-dependent methyltransferase MMAR_1059 (324 aa).

Residues Asp138 and 167–168 (DL) contribute to the S-adenosyl-L-methionine site.

The protein belongs to the UPF0677 family.

In terms of biological role, exhibits S-adenosyl-L-methionine-dependent methyltransferase activity. The chain is Putative S-adenosyl-L-methionine-dependent methyltransferase MMAR_1059 from Mycobacterium marinum (strain ATCC BAA-535 / M).